A 103-amino-acid chain; its full sequence is Transcriptional regulator WhiB7 (103 aa).

[4Fe-4S] cluster contacts are provided by cysteine 17, cysteine 49, cysteine 52, and cysteine 58. Residues 25-82 enclose the 4Fe-4S Wbl-type domain; that stretch reads PCHVGDPDLWFAENPGDLERAKALCAGCPIRVQCLTAALERQEPWGVWGGEILDRGSI. Positions 82–103 are disordered; it reads IVARKRPRGRPRKDSGGNPAAA.

It belongs to the WhiB family. Requires [4Fe-4S] cluster as cofactor. In terms of processing, the Fe-S cluster can be nitrosylated by nitric oxide (NO). Post-translationally, upon Fe-S cluster removal intramolecular disulfide bonds are formed.

It is found in the cytoplasm. Functionally, acts as a transcriptional regulator. Probably redox-responsive. The apo- but not holo-form probably binds DNA. Participates in maintaining a reduced cytoplasmic (MSH/MSSM) environment under normal growth conditions and directly or indirectly controls the concentration of mycothiol (MSH + MSSM). In Mycolicibacterium smegmatis (strain ATCC 700084 / mc(2)155) (Mycobacterium smegmatis), this protein is Transcriptional regulator WhiB7 (whiB7).